Reading from the N-terminus, the 686-residue chain is Alpha-amylase 1 (686 aa).

Glutamate 125 (nucleophile) is an active-site residue. Aspartate 216 serves as the catalytic Proton donor.

Belongs to the glycosyl hydrolase 57 family.

It localises to the cytoplasm. The enzyme catalyses Endohydrolysis of (1-&gt;4)-alpha-D-glucosidic linkages in polysaccharides containing three or more (1-&gt;4)-alpha-linked D-glucose units.. This amylase is a highly liquefying-type: oligomers appeared at the beginning of incubation, followed by a graded decrease in the amounts of maltotriose, maltose and glucose in prolonged incubation. The protein is Alpha-amylase 1 (amyA) of Dictyoglomus thermophilum (strain ATCC 35947 / DSM 3960 / H-6-12).